The chain runs to 318 residues: Receptor homology region, transmembrane domain- and RING domain-containing protein 5 (318 aa).

Positions 1 to 20 are cleaved as a signal peptide; sequence MNYSWITIMSLLVICKLASA. The Lumenal portion of the chain corresponds to 22 to 163; that stretch reads VVLIGKNTIL…IPGFGISSWS (142 aa). An intrachain disulfide couples Cys-62 to Cys-87. The PA domain maps to 70–143; sequence EKRSKYRSSY…RASGEVLKGY (74 aa). Asn-121 carries an N-linked (GlcNAc...) asparagine glycan. The helical transmembrane segment at 164-184 threads the bilayer; sequence IMGITFISLLAMSAILATCFV. At 185–318 the chain is on the cytoplasmic side; that stretch reads VRRHQIRQSV…DLPIVVRVYL (134 aa). The RING-type; atypical zinc finger occupies 233–275; that stretch reads CAICIDDYCVGEKLRILPCKHKYHAVCIDSWLGRCRSFCPVCK.

It localises to the prevacuolar compartment membrane. It is found in the protein storage vacuole membrane. In terms of biological role, involved in the trafficking of vacuolar proteins. May function as a sorting receptor for protein trafficking to the protein storage vacuole (PSV). The chain is Receptor homology region, transmembrane domain- and RING domain-containing protein 5 (RMR5) from Arabidopsis thaliana (Mouse-ear cress).